A 78-amino-acid polypeptide reads, in one-letter code: UPF0369 protein RF_1112 (78 aa).

Belongs to the SDHAF4 family.

This is UPF0369 protein RF_1112 from Rickettsia felis (strain ATCC VR-1525 / URRWXCal2) (Rickettsia azadi).